Here is a 518-residue protein sequence, read N- to C-terminus: Putative BTB/POZ domain and WD-repeat protein R731 (518 aa).

A BTB domain is found at 22 to 92 (TDCQLHLTDS…FYGFPLEEPN (71 aa)). Residues 224-246 (NHEESSDDEVNDDEDTDNEDTDD) form a disordered region. A compositionally biased stretch (acidic residues) spans 228–246 (SSDDEVNDDEDTDNEDTDD). 2 WD repeats span residues 391 to 430 (NHSTTINHILYSPKSKYFIFCDENSIIYVYSTKDNYSLIK) and 437 to 475 (FLKFGVKDFEFMTSKIIVAIDIKGKICIWNIETEQIIQN).

This sequence belongs to the mimivirus BTB/WD family.

The chain is Putative BTB/POZ domain and WD-repeat protein R731 from Acanthamoeba polyphaga (Amoeba).